Reading from the N-terminus, the 406-residue chain is Cysteine desulfurase IscS (406 aa).

Pyridoxal 5'-phosphate is bound by residues 75-76 (AT), N155, Q183, and 203-205 (SSH). An N6-(pyridoxal phosphate)lysine modification is found at K206. T243 serves as a coordination point for pyridoxal 5'-phosphate. The Cysteine persulfide intermediate role is filled by C330. A [2Fe-2S] cluster-binding site is contributed by C330.

It belongs to the class-V pyridoxal-phosphate-dependent aminotransferase family. NifS/IscS subfamily. Homodimer. Forms a heterotetramer with IscU, interacts with other sulfur acceptors. The cofactor is pyridoxal 5'-phosphate.

The protein resides in the cytoplasm. The catalysed reaction is (sulfur carrier)-H + L-cysteine = (sulfur carrier)-SH + L-alanine. Its pathway is cofactor biosynthesis; iron-sulfur cluster biosynthesis. Its function is as follows. Master enzyme that delivers sulfur to a number of partners involved in Fe-S cluster assembly, tRNA modification or cofactor biosynthesis. Catalyzes the removal of elemental sulfur atoms from cysteine to produce alanine. Functions as a sulfur delivery protein for Fe-S cluster synthesis onto IscU, an Fe-S scaffold assembly protein, as well as other S acceptor proteins. This Glaesserella parasuis serovar 5 (strain SH0165) (Haemophilus parasuis) protein is Cysteine desulfurase IscS.